We begin with the raw amino-acid sequence, 321 residues long: PI-PLC X domain-containing protein 3 (321 aa).

A PI-PLC X-box domain is found at 22-197 (SIHSIPLTNL…DYQVLVFYHS (176 aa)). Active-site residues include histidine 37 and histidine 114.

In Bos taurus (Bovine), this protein is PI-PLC X domain-containing protein 3 (PLCXD3).